The chain runs to 511 residues: Ent-copalyl diphosphate synthase (511 aa).

D291 and D293 together coordinate a divalent metal cation. A DXDD motif motif is present at residues 291–294; the sequence is DSDD.

This sequence belongs to the terpene synthase family. Homodimer. A divalent metal cation serves as cofactor.

It carries out the reaction (2E,6E,10E)-geranylgeranyl diphosphate = ent-copalyl diphosphate. Its pathway is antibiotic biosynthesis. In terms of biological role, involved in viguiepinol biosynthesis. Catalyzes the conversion of geranylgeranyl diphosphate (GGDP) into copalyl diphosphate (ent-CDP). The protein is Ent-copalyl diphosphate synthase of Streptomyces sp. (strain KO-3988).